The chain runs to 399 residues: tRNA-specific 2-thiouridylase MnmA (399 aa).

ATP contacts are provided by residues 21 to 28 (AMSGGVDS) and Leu-47. Cys-115 serves as the catalytic Nucleophile. Cysteines 115 and 211 form a disulfide. ATP is bound at residue Gly-139. Residues 161-163 (RDQ) form an interaction with tRNA region. Cys-211 functions as the Cysteine persulfide intermediate in the catalytic mechanism.

This sequence belongs to the MnmA/TRMU family.

The protein resides in the cytoplasm. The catalysed reaction is S-sulfanyl-L-cysteinyl-[protein] + uridine(34) in tRNA + AH2 + ATP = 2-thiouridine(34) in tRNA + L-cysteinyl-[protein] + A + AMP + diphosphate + H(+). Functionally, catalyzes the 2-thiolation of uridine at the wobble position (U34) of tRNA, leading to the formation of s(2)U34. This Parvibaculum lavamentivorans (strain DS-1 / DSM 13023 / NCIMB 13966) protein is tRNA-specific 2-thiouridylase MnmA.